We begin with the raw amino-acid sequence, 318 residues long: tRNA-cytidine(32) 2-sulfurtransferase (318 aa).

Residues methionine 1–asparagine 29 are disordered. Residues histidine 16 to glutamine 27 show a composition bias toward polar residues. The PP-loop motif motif lies at serine 64–serine 69. [4Fe-4S] cluster is bound by residues cysteine 139, cysteine 142, and cysteine 230.

The protein belongs to the TtcA family. As to quaternary structure, homodimer. Requires Mg(2+) as cofactor. [4Fe-4S] cluster serves as cofactor.

The protein localises to the cytoplasm. The catalysed reaction is cytidine(32) in tRNA + S-sulfanyl-L-cysteinyl-[cysteine desulfurase] + AH2 + ATP = 2-thiocytidine(32) in tRNA + L-cysteinyl-[cysteine desulfurase] + A + AMP + diphosphate + H(+). The protein operates within tRNA modification. Its function is as follows. Catalyzes the ATP-dependent 2-thiolation of cytidine in position 32 of tRNA, to form 2-thiocytidine (s(2)C32). The sulfur atoms are provided by the cysteine/cysteine desulfurase (IscS) system. This chain is tRNA-cytidine(32) 2-sulfurtransferase, found in Pseudoalteromonas atlantica (strain T6c / ATCC BAA-1087).